A 212-amino-acid chain; its full sequence is Eukaryotic translation initiation factor 4E-4 (212 aa).

Cysteine 143 and cysteine 147 are oxidised to a cystine.

Belongs to the eukaryotic initiation factor 4E family. In terms of assembly, eIF4F is a multi-subunit complex, the composition of which varies with external and internal environmental conditions. It is composed of at least eIF4A, eIF4E and eIF4G. eIF4E is also known to interact with other partners. Enriched in somatic cells.

Functionally, recognizes and binds the 7-methylguanosine-containing mRNA cap during an early step in the initiation of protein synthesis and facilitates ribosome binding by inducing the unwinding of the mRNAs secondary structures. All 5 eIF4E proteins bind monomethyl cap structures. Only ife-1, ife-2 and ife-5 bind trimethyl cap structures which result from trans-splicing. Translation of trimethyl cap structure mRNAs may be regulated by intracellular redox state; disulfide bonds change the width and depth of the cap-binding cavity determining selectivity to mRNA caps. In Caenorhabditis elegans, this protein is Eukaryotic translation initiation factor 4E-4 (ife-4).